Here is a 348-residue protein sequence, read N- to C-terminus: MSSDIEAPTSLTSMRGALPPAVADDVRALHLTTVRHDGVPPLSEQPLLWLSDQEAPVVHVLAWHAVTGGAQELVGYAQVDVGSSTTARAELVVAPGHRRRGTGRSLLAHAAQEAASIPGRRLHVWAHGDLPAARATAAATGLVVVRELWRMAVDVTQHPPGAPQLPPGVAVRAFVPGQDEDAWRRVNARAFAHHPEQGRMTSADLRARESEPWFDPAGFLLAERDGQLLGSVWTKVHPGSEAPDGAPGEEVGEIYVVGVDPDAQGLGMGRALTALGLAHLRDRGLRTVILYTGAENTVAVHTYRRAGFARTAVDVMYGPPPAGSPAHGTPLVRVTDTPSSPGDATMGS.

2 N-acetyltransferase domains span residues 12–156 (TSMR…VDVT) and 169–330 (VAVR…HGTP). Position 44 (Glu-44) interacts with 1D-myo-inositol 2-(L-cysteinylamino)-2-deoxy-alpha-D-glucopyranoside. 91 to 93 (LVV) contributes to the acetyl-CoA binding site. Positions 196, 235, and 253 each coordinate 1D-myo-inositol 2-(L-cysteinylamino)-2-deoxy-alpha-D-glucopyranoside. Acetyl-CoA is bound by residues 257–259 (VGV) and 264–270 (QGLGMGR). Tyr-291 is a binding site for 1D-myo-inositol 2-(L-cysteinylamino)-2-deoxy-alpha-D-glucopyranoside. 296-301 (NTVAVH) lines the acetyl-CoA pocket. The tract at residues 320 to 348 (PPAGSPAHGTPLVRVTDTPSSPGDATMGS) is disordered. The span at 336-348 (DTPSSPGDATMGS) shows a compositional bias: polar residues.

The protein belongs to the acetyltransferase family. MshD subfamily. In terms of assembly, monomer.

The catalysed reaction is 1D-myo-inositol 2-(L-cysteinylamino)-2-deoxy-alpha-D-glucopyranoside + acetyl-CoA = mycothiol + CoA + H(+). Catalyzes the transfer of acetyl from acetyl-CoA to desacetylmycothiol (Cys-GlcN-Ins) to form mycothiol. The chain is Mycothiol acetyltransferase from Cellulomonas flavigena (strain ATCC 482 / DSM 20109 / BCRC 11376 / JCM 18109 / NBRC 3775 / NCIMB 8073 / NRS 134).